The following is a 655-amino-acid chain: Protein nipi-3 (655 aa).

Residues 1–35 form a disordered region; it reads MARTKCKTKTVANPRTGVRKTAKDLSEPVRQDAVS. The span at 21 to 35 shows a compositional bias: basic and acidic residues; sequence TAKDLSEPVRQDAVS. One can recognise a Protein kinase domain in the interval 200–470; the sequence is IGIFVIYGTG…NQVNGDFPEI (271 aa). ATP contacts are provided by residues 206 to 214 and Lys235; that span reads YGTGLVTRA.

Belongs to the protein kinase superfamily. CAMK Ser/Thr protein kinase family. May interact with transcription factor cebp-1 (via N-terminus). Expressed in epidermis, pharynx, intestine, a subset of head neurons and motoneurons.

It localises to the nucleus. In terms of biological role, adapter protein that regulates different signaling pathways. Required for larval development and viability. Involved in negatively modulating pmk-1 p38/MAPK signaling. Involved in innate immunity, acting either in a manner dependent upon, or independent of, the pmk-1 or pmk-3 p38/MAPK pathways. Has a protective role in response to infection by the Gram-negative bacterium P.aeruginosa, acting by negatively modulating expression of cebp-1, and regulating the pmk-1 p38/MAPK pathway, leading to activation of transcription factor skn-1. Required to prevent P.aeruginosa toxin ToxA-mediated lethality, probably acting via modulating the effects of translational inhibition caused by the toxin. By regulating the up-regulation in the epidermis of antimicrobial peptides nlp-29 and nlp-31, plays a role in resistance to fungal infection. This is Protein nipi-3 from Caenorhabditis elegans.